Consider the following 296-residue polypeptide: AUGMIN subunit 2 (296 aa).

2 coiled-coil regions span residues 56–83 (DDLI…QGRK) and 253–285 (AVHK…NRRL). The interval 218 to 296 (AVSLPTTPGG…WPPSVKKSSV (79 aa)) is disordered. Over residues 264–277 (QNEEEEEEEEEEDG) the composition is skewed to acidic residues.

The protein belongs to the HAUS2 family. Part of the augmin complex composed of 8 subunits. The complex acts on microtubules and interacts with gamma-tubulin in spindles and the phragmoplast.

Functionally, contributes to the assembly of the acentrosomal spindle and phragmoplast microtubule arrays as part of the augmin complex. The protein is AUGMIN subunit 2 of Arabidopsis thaliana (Mouse-ear cress).